The primary structure comprises 358 residues: Phospho-N-acetylmuramoyl-pentapeptide-transferase (358 aa).

The next 10 membrane-spanning stretches (helical) occupy residues 28–48 (WALATALLVSIVVGPRFIAWL), 72–92 (TMGGLLIGFAVTFSVLLWADL), 96–116 (YIWLTLLVFTGFGFIGFLDDY), 133–153 (FLWQVGVAVAAMYLLVQLPAY), 164–184 (GLTPDLGWLYIPFAVAVMVGS), 196–216 (GLAIGPTIVAGIVFSIFIYVA), 233–253 (VGEVAVFCGALVGAGLGFLWF), 260–280 (VFMGDVGSLSLGGTLGFLAVL), 285–305 (LLLLVVGGLFVVETLSVILQV), and 335–355 (KIIIRFWITSALLGLIALSVL).

The protein belongs to the glycosyltransferase 4 family. MraY subfamily. Requires Mg(2+) as cofactor.

It localises to the cell inner membrane. It carries out the reaction UDP-N-acetyl-alpha-D-muramoyl-L-alanyl-gamma-D-glutamyl-meso-2,6-diaminopimeloyl-D-alanyl-D-alanine + di-trans,octa-cis-undecaprenyl phosphate = di-trans,octa-cis-undecaprenyl diphospho-N-acetyl-alpha-D-muramoyl-L-alanyl-D-glutamyl-meso-2,6-diaminopimeloyl-D-alanyl-D-alanine + UMP. Its pathway is cell wall biogenesis; peptidoglycan biosynthesis. Catalyzes the initial step of the lipid cycle reactions in the biosynthesis of the cell wall peptidoglycan: transfers peptidoglycan precursor phospho-MurNAc-pentapeptide from UDP-MurNAc-pentapeptide onto the lipid carrier undecaprenyl phosphate, yielding undecaprenyl-pyrophosphoryl-MurNAc-pentapeptide, known as lipid I. This is Phospho-N-acetylmuramoyl-pentapeptide-transferase from Nitratidesulfovibrio vulgaris (strain ATCC 29579 / DSM 644 / CCUG 34227 / NCIMB 8303 / VKM B-1760 / Hildenborough) (Desulfovibrio vulgaris).